The following is a 484-amino-acid chain: PTS system N-acetylmuramic acid-specific EIIBC component (484 aa).

Residues 1–89 (MAKITSNTVS…NQLIDSLTSG (89 aa)) enclose the PTS EIIB type-1 domain. Residue Cys28 is the Phosphocysteine intermediate; for EIIB activity of the active site. The PTS EIIC type-1 domain maps to 125–484 (SKFATIFTPL…FFGCKDVDLS (360 aa)). Transmembrane regions (helical) follow at residues 127–147 (FATI…LLGF), 168–188 (LIAY…ILIG), 194–214 (AFGG…LGYN), 228–248 (FFGF…AAII), 266–286 (MILT…LIIM), 310–330 (AAIL…QGFV), 345–365 (LFPI…ALYF), 379–399 (GAII…VTLP), 409–429 (IGGA…LPVG), and 451–471 (IFPG…VGFL).

It is found in the cell inner membrane. The catalysed reaction is N-acetyl-beta-D-muramate(out) + N(pros)-phospho-L-histidyl-[protein] = N-acetyl-beta-D-muramate 6-phosphate(in) + L-histidyl-[protein]. In terms of biological role, the phosphoenolpyruvate-dependent sugar phosphotransferase system (sugar PTS), a major carbohydrate active transport system, catalyzes the phosphorylation of incoming sugar substrates concomitantly with their translocation across the cell membrane. This system is involved in N-acetylmuramic acid (MurNAc) transport, yielding cytoplasmic MurNAc-6-P. Is also able to take up anhydro-N-acetylmuramic acid (anhMurNAc), but cannot phosphorylate the carbon 6, probably because of the 1,6-anhydro ring. The chain is PTS system N-acetylmuramic acid-specific EIIBC component (murP) from Vibrio parahaemolyticus serotype O3:K6 (strain RIMD 2210633).